A 191-amino-acid chain; its full sequence is CASP-like protein 2U4 (191 aa).

At 1–25 the chain is on the cytoplasmic side; that stretch reads MGAYDGAEAPRAAPASTAANSRPSR. The chain crosses the membrane as a helical span at residues 26–46; that stretch reads LLLLHSLLLRLVAVVLSILVI. Residues 47 to 68 are Extracellular-facing; that stretch reads AVMVHAKQRVMIFKAEWDNSKA. A helical transmembrane segment spans residues 69 to 89; that stretch reads FVALVTISAICLGYSFLQFIL. Topologically, residues 90–114 are cytoplasmic; sequence SAFHLCSKSWKSPTKCWAWMNFIAD. The chain crosses the membrane as a helical span at residues 115–135; that stretch reads QILTYAMLGAAAAAAELAYIA. The Extracellular portion of the chain corresponds to 136-157; that stretch reads KNGSSRAQWQPICSTFNTFCTR. N-linked (GlcNAc...) asparagine glycosylation occurs at N137. The helical transmembrane segment at 158–178 threads the bilayer; the sequence is AGASIILSFIAVLALANSSAI. Over 179-191 the chain is Cytoplasmic; the sequence is SAYHLFRRPSSSV.

It belongs to the Casparian strip membrane proteins (CASP) family. As to quaternary structure, homodimer and heterodimers.

It is found in the cell membrane. The polypeptide is CASP-like protein 2U4 (Selaginella moellendorffii (Spikemoss)).